Here is a 439-residue protein sequence, read N- to C-terminus: GTPase Der (439 aa).

2 consecutive EngA-type G domains span residues 3–167 and 176–351; these read PTVA…DKVG and IKVA…GNYT. GTP contacts are provided by residues 9–16, 56–60, 119–122, 182–189, 229–233, and 294–297; these read GRPNVGKS, DTGGI, NKID, GKPNTGKS, DTAGL, and NKWD. Residues 352-436 enclose the KH-like domain; it reads RRITTGQIND…PIVFLIREKG (85 aa).

Belongs to the TRAFAC class TrmE-Era-EngA-EngB-Septin-like GTPase superfamily. EngA (Der) GTPase family. As to quaternary structure, associates with the 50S ribosomal subunit.

In terms of biological role, GTPase that plays an essential role in the late steps of ribosome biogenesis. The sequence is that of GTPase Der from Caldicellulosiruptor saccharolyticus (strain ATCC 43494 / DSM 8903 / Tp8T 6331).